The sequence spans 47 residues: TPEHQRYIELFLVVDHGMFMKYNGNSDKIYYYIHQMVNIMKXAYXYL.

The region spanning 6–47 (RYIELFLVVDHGMFMKYNGNSDKIYYYIHQMVNIMKXAYXYL) is the Peptidase M12B domain. A Ca(2+)-binding site is contributed by E9.

The protein belongs to the venom metalloproteinase (M12B) family. Monomer. The cofactor is Zn(2+). Expressed by the venom gland.

It is found in the secreted. With respect to regulation, inhibited by 1,10-phenanthroline and EDTA. In terms of biological role, the metalloproteinase is a probable venom zinc protease that induces local hemorrhage in the skin of rats. Degrades type-IV collagen, gelatin, laminin and fibronectin. Has fibrinolytic activities. Has high hemagglutinating activity on red blood cells. Cleaves insulin B chain at 29-His-|-Leu-30, and 38-Ala-|-Leu-39 bonds. The protein is Snake venom metalloproteinase jararafibrase-4 of Bothrops jararaca (Jararaca).